Here is a 393-residue protein sequence, read N- to C-terminus: Nuclear speckle splicing regulatory protein 1 homolog (393 aa).

Residues 1-49 (MSAPPKRFGLIVKQKEEPKRAPVRVSSVFGDDDDDEAPATATNTSSASV) form a disordered region. Residues 39 to 48 (ATATNTSSAS) show a composition bias toward low complexity. A coiled-coil region spans residues 76–166 (NYDEIQAIKN…YREQEAEEAA (91 aa)). The tract at residues 187–350 (LLNDLARDPT…SLKDKLKPKR (164 aa)) is disordered. Residues 199–209 (KQRKMEKKNVR) show a composition bias toward basic residues. 4 stretches are compositionally biased toward basic and acidic residues: residues 222 to 236 (EDVK…KSIY), 243 to 261 (DEKK…EGEL), 317 to 333 (DHAQ…KSPE), and 341 to 350 (SLKDKLKPKR).

Belongs to the NSRP1 family.

This is Nuclear speckle splicing regulatory protein 1 homolog from Caenorhabditis briggsae.